The sequence spans 182 residues: ATP-dependent protease subunit HslV (182 aa).

The active site involves Thr-12. The Na(+) site is built by Ala-167, Cys-170, and Thr-173.

This sequence belongs to the peptidase T1B family. HslV subfamily. A double ring-shaped homohexamer of HslV is capped on each side by a ring-shaped HslU homohexamer. The assembly of the HslU/HslV complex is dependent on binding of ATP.

Its subcellular location is the cytoplasm. The enzyme catalyses ATP-dependent cleavage of peptide bonds with broad specificity.. With respect to regulation, allosterically activated by HslU binding. Its function is as follows. Protease subunit of a proteasome-like degradation complex believed to be a general protein degrading machinery. The chain is ATP-dependent protease subunit HslV from Chlorobium phaeobacteroides (strain DSM 266 / SMG 266 / 2430).